Reading from the N-terminus, the 251-residue chain is Probable transcriptional regulatory protein CC_3243 (251 aa).

Belongs to the TACO1 family.

It is found in the cytoplasm. This is Probable transcriptional regulatory protein CC_3243 from Caulobacter vibrioides (strain ATCC 19089 / CIP 103742 / CB 15) (Caulobacter crescentus).